The following is a 621-amino-acid chain: Putative 5'-3' exonuclease R528 (621 aa).

Belongs to the 5'-3' exonuclease family.

It is found in the virion. This is Putative 5'-3' exonuclease R528 from Acanthamoeba polyphaga mimivirus (APMV).